The sequence spans 318 residues: Forkhead box protein I2 (318 aa).

Residues 1–30 (MATYCDDLGPSSAPPGQAQATAHPPGYEPG) form a disordered region. The fork-head DNA-binding region spans 102 to 196 (RPPYSYSALI…DNGNFRRKRK (95 aa)).

It is found in the nucleus. Functionally, possible transcriptional activator. The protein is Forkhead box protein I2 (FOXI2) of Homo sapiens (Human).